A 219-amino-acid chain; its full sequence is Thymidylate kinase (219 aa).

An ATP-binding site is contributed by 9-16 (GIEGCGKT).

Belongs to the thymidylate kinase family.

It carries out the reaction dTMP + ATP = dTDP + ADP. In terms of biological role, phosphorylation of dTMP to form dTDP in both de novo and salvage pathways of dTTP synthesis. This is Thymidylate kinase from Syntrophus aciditrophicus (strain SB).